The primary structure comprises 305 residues: Peroxisome biogenesis factor 2 (305 aa).

The Peroxisomal matrix portion of the chain corresponds to 1–15 (MAAREESTQSANRVL). A helical transmembrane segment spans residues 16–42 (RISQLDALELNKALEQLVWSQFTQCFH). Residues 43 to 48 (GFKPGL) lie on the Cytoplasmic side of the membrane. A helical membrane pass occupies residues 49-74 (LARFEPEVKAFLWLFLWRFTIYSKNA). Residues 75-98 (TVGQSVLNIQHKNDSSPNPVYQPP) are Peroxisomal matrix-facing. The chain crosses the membrane as a helical span at residues 99–125 (SKNQKLLYAVCTIGGRWLEERCYDLFR). Topologically, residues 126-133 (NRHLASFG) are cytoplasmic. A helical transmembrane segment spans residues 134–160 (KAKQCMNFVVGLLKLGELMNFLIFLQK). Over 161 to 187 (GKFATLTERLLGIHSVFCKPQNMREVG) the chain is Peroxisomal matrix. Residues 188–211 (FEYMNRELLWHGFAEFLIFLLPLI) traverse the membrane as a helical segment. At 212 to 305 (NIQKLKAKLS…GIQMSEVNAL (94 aa)) the chain is on the cytoplasmic side. Residues cysteine 244, cysteine 247, cysteine 259, histidine 261, cysteine 264, cysteine 267, cysteine 280, and cysteine 283 each contribute to the Zn(2+) site. An RING-type zinc finger spans residues 244–284 (CALCGEWPTMPHTIGCEHVFCYYCVKSSFLFDIYFTCPKCG).

Belongs to the pex2/pex10/pex12 family. In terms of assembly, component of the PEX2-PEX10-PEX12 retrotranslocation channel, composed of PEX2, PEX10 and PEX12. Post-translationally, forms intramolecular and intermolecular disulfide bonds in response to reactive oxygen species (ROS), promoting higher stability.

The protein localises to the peroxisome membrane. It carries out the reaction [E2 ubiquitin-conjugating enzyme]-S-ubiquitinyl-L-cysteine + [acceptor protein]-L-cysteine = [E2 ubiquitin-conjugating enzyme]-L-cysteine + [acceptor protein]-S-ubiquitinyl-L-cysteine.. The catalysed reaction is S-ubiquitinyl-[E2 ubiquitin-conjugating enzyme]-L-cysteine + [acceptor protein]-L-lysine = [E2 ubiquitin-conjugating enzyme]-L-cysteine + N(6)-ubiquitinyl-[acceptor protein]-L-lysine.. The protein operates within protein modification; protein ubiquitination. In terms of biological role, E3 ubiquitin-protein ligase component of a retrotranslocation channel required for peroxisome organization by mediating export of the PEX5 receptor from peroxisomes to the cytosol, thereby promoting PEX5 recycling. The retrotranslocation channel is composed of PEX2, PEX10 and PEX12; each subunit contributing transmembrane segments that coassemble into an open channel that specifically allows the passage of PEX5 through the peroxisomal membrane. PEX2 also regulates peroxisome organization by acting as a E3 ubiquitin-protein ligase. PEX2 ubiquitinates PEX5 during its passage through the retrotranslocation channel: catalyzes monoubiquitination of PEX5 at 'Cys-11', a modification that acts as a signal for PEX5 extraction into the cytosol. Required for pexophagy in response to starvation by mediating ubiquitination of peroxisomal proteins, such as PEX5 and ABCD3/PMP70. Also involved in the response to reactive oxygen species (ROS) by mediating 'Lys-48'-linked polyubiquitination and subsequent degradation of PNPLA2/ATGL, thereby regulating lipolysis. In Mus musculus (Mouse), this protein is Peroxisome biogenesis factor 2.